The following is a 98-amino-acid chain: HssA/B-like protein 33 (98 aa).

2 disordered regions span residues 1–29 (MTLF…SGTS) and 60–98 (AKSS…SCSC). Over residues 60 to 72 (AKSSGGSCGGKGG) the composition is skewed to gly residues. A compositionally biased stretch (basic residues) spans 73-88 (PHNHGHGNGHGPHGHG). Residues 89–98 (GKGSGGSCSC) are compositionally biased toward gly residues.

It belongs to the hssA/B family.

The polypeptide is HssA/B-like protein 33 (hssl33) (Dictyostelium discoideum (Social amoeba)).